A 114-amino-acid polypeptide reads, in one-letter code: UPF0342 protein SERP1381 (114 aa).

Belongs to the UPF0342 family.

The sequence is that of UPF0342 protein SERP1381 from Staphylococcus epidermidis (strain ATCC 35984 / DSM 28319 / BCRC 17069 / CCUG 31568 / BM 3577 / RP62A).